The following is a 164-amino-acid chain: MTTFLGNSVTFTGKQLQVGDIAKDFLLIATDLSQKSLKDFEGKKKVISVVPSIDTGICSKQTRTFNEELSELDNTVVITVSMDLPFAQKRWCSAEGLDNVILLSDFYDHSFGQDYALLMNEWHLLTRAVLILDEHNKVTYTEYVDNVNSDVDYEAAINAAKILP.

The Thioredoxin domain maps to 16–162 (LQVGDIAKDF…YEAAINAAKI (147 aa)). Cys58 (cysteine sulfenic acid (-SOH) intermediate) is an active-site residue. A disulfide bridge connects residues Cys58 and Cys92.

This sequence belongs to the peroxiredoxin family. Tpx subfamily. As to quaternary structure, homodimer.

The enzyme catalyses a hydroperoxide + [thioredoxin]-dithiol = an alcohol + [thioredoxin]-disulfide + H2O. Functionally, thiol-specific peroxidase that catalyzes the reduction of hydrogen peroxide and organic hydroperoxides to water and alcohols, respectively. Plays a role in cell protection against oxidative stress by detoxifying peroxides. This chain is Thiol peroxidase, found in Streptococcus agalactiae serotype III (strain NEM316).